A 249-amino-acid polypeptide reads, in one-letter code: Proteasome subunit alpha type-7-B (249 aa).

The protein belongs to the peptidase T1A family. In terms of assembly, the 26S proteasome consists of a 20S proteasome core and two 19S regulatory subunits. The 20S proteasome core is composed of 28 subunits that are arranged in four stacked rings, resulting in a barrel-shaped structure. The two end rings are each formed by seven alpha subunits, and the two central rings are each formed by seven beta subunits. The catalytic chamber with the active sites is on the inside of the barrel.

The protein localises to the cytoplasm. The protein resides in the nucleus. The proteasome is a multicatalytic proteinase complex which is characterized by its ability to cleave peptides with Arg, Phe, Tyr, Leu, and Glu adjacent to the leaving group at neutral or slightly basic pH. The proteasome has an ATP-dependent proteolytic activity. This Oryza sativa subsp. indica (Rice) protein is Proteasome subunit alpha type-7-B (PAD1).